The following is a 63-amino-acid chain: Sperm protamine P1 (63 aa).

Residues 1-63 (MARYRRHSRS…RYSRRGRRRY (63 aa)) are disordered.

This sequence belongs to the protamine P1 family. In terms of tissue distribution, testis.

The protein localises to the nucleus. Its subcellular location is the chromosome. Functionally, protamines substitute for histones in the chromatin of sperm during the haploid phase of spermatogenesis. They compact sperm DNA into a highly condensed, stable and inactive complex. This chain is Sperm protamine P1 (PRM1), found in Pseudantechinus macdonnellensis (Fat-tailed marsupial mouse).